Here is a 56-residue protein sequence, read N- to C-terminus: Ovomucoid (56 aa).

Residues 6-56 (VDCSDHPKPACLQEQKPICGSDNKTYDNKCSFCNAVVDSNGTLTLSHFGKC) enclose the Kazal-like domain. Intrachain disulfides connect Cys8-Cys38, Cys16-Cys35, and Cys24-Cys56. Asn45 carries an N-linked (GlcNAc...) asparagine glycan.

The protein resides in the secreted. The chain is Ovomucoid from Ortalis vetula (Plain chachalaca).